A 351-amino-acid polypeptide reads, in one-letter code: L-threonine 3-dehydrogenase (351 aa).

Cys-42 is a Zn(2+) binding site. Residues Thr-44 and His-47 each act as charge relay system in the active site. Zn(2+) is bound by residues His-67, Glu-68, Cys-97, Cys-100, Cys-103, and Cys-111. Residues Ile-179, Asp-199, Arg-204, 266-268 (LGL), and 291-292 (IT) contribute to the NAD(+) site.

The protein belongs to the zinc-containing alcohol dehydrogenase family. In terms of assembly, homotetramer. Requires Zn(2+) as cofactor.

It is found in the cytoplasm. It carries out the reaction L-threonine + NAD(+) = (2S)-2-amino-3-oxobutanoate + NADH + H(+). It functions in the pathway amino-acid degradation; L-threonine degradation via oxydo-reductase pathway; glycine from L-threonine: step 1/2. Catalyzes the NAD(+)-dependent oxidation of L-threonine to 2-amino-3-ketobutyrate. The polypeptide is L-threonine 3-dehydrogenase (Symbiobacterium thermophilum (strain DSM 24528 / JCM 14929 / IAM 14863 / T)).